A 229-amino-acid chain; its full sequence is Large ribosomal subunit protein uL1 (229 aa).

It belongs to the universal ribosomal protein uL1 family. Part of the 50S ribosomal subunit.

Binds directly to 23S rRNA. The L1 stalk is quite mobile in the ribosome, and is involved in E site tRNA release. In terms of biological role, protein L1 is also a translational repressor protein, it controls the translation of the L11 operon by binding to its mRNA. This Flavobacterium psychrophilum (strain ATCC 49511 / DSM 21280 / CIP 103535 / JIP02/86) protein is Large ribosomal subunit protein uL1.